A 139-amino-acid chain; its full sequence is 10 kDa chaperonin 2, chloroplastic (139 aa).

Residues 1–39 constitute a chloroplast transit peptide; it reads MASTFVCSLPNPFFAFPVKATTPSTANHTLLGSRRGCLR. The tract at residues 51 to 138 is cpn-10 domain; it reads KVVPQADRVL…CKESDLLALV (88 aa).

The protein belongs to the GroES chaperonin family. Expressed in leaves and stems. Expressed at low levels in germinating seeds, seedlings, rosettes leaves, flowers and siliques.

Its subcellular location is the plastid. It is found in the chloroplast stroma. In terms of biological role, functions as a co-chaperone for protein folding in chloroplasts. This chain is 10 kDa chaperonin 2, chloroplastic, found in Arabidopsis thaliana (Mouse-ear cress).